The primary structure comprises 516 residues: Histone H4 transcription factor (516 aa).

3 C2H2-type zinc fingers span residues 15–39 (LQCE…VTQH), 127–151 (FLCL…VEAH), and 167–191 (VLCG…LRSH). The C2H2-type 4; degenerate zinc finger occupies 197–219 (VACPTCGGMFANNTKFLDHIRRQ). C2H2-type zinc fingers lie at residues 227-249 (FQCS…MRNH), 253-276 (YKCP…RFRH), 282-304 (FKCD…LDTH), 310-335 (YSCD…RKVH), and 343-366 (YRCH…RKKH). The interaction with NPAT stretch occupies residues 371-516 (PSGHPRFRYK…AAEEPEVQMV (146 aa)). Residues 372–405 (SGHPRFRYKEHEDGYMRLQLVRYESVELTQQLLR) are required for activation of histone H4 transcription and contributes to DNA-binding. Disordered stretches follow at residues 429–456 (TVPG…PASQ) and 486–516 (PGEP…VQMV). A compositionally biased stretch (acidic residues) spans 436–445 (PQEEAEEEGG).

As to quaternary structure, binds MBD2 and a histone deacetylase complex. Interacts with NPAT. In terms of processing, ubiquitinated. Ubiquitination may lead to proteasome-mediated degradation.

The protein resides in the nucleus. Functionally, transcriptional repressor that binds to the consensus sequence 5'-CGGACGTT-3' and to the RB1 promoter. Transcriptional activator that promotes histone H4 gene transcription at the G1/S phase transition in conjunction with NPAT. Also activates transcription of the ATM and PRKDC genes. Autoregulates its expression by associating with its own promoter. The polypeptide is Histone H4 transcription factor (HINFP) (Bos taurus (Bovine)).